Reading from the N-terminus, the 486-residue chain is Membrane-bound lytic murein transglycosylase F (486 aa).

Residues 1-29 form the signal peptide; it reads MFSPTALRPRYAKWLIATGLFLMLSGCVD. The non-LT domain stretch occupies residues 30–267; it reads KPNTLERVKE…RLKDRYYGHV (238 aa). Residues 268 to 486 are LT domain; the sequence is DVLGYMGATT…SKPAQEPAPL (219 aa). Residue glutamate 314 is part of the active site.

The protein in the N-terminal section; belongs to the bacterial solute-binding protein 3 family. It in the C-terminal section; belongs to the transglycosylase Slt family.

The protein resides in the cell outer membrane. The enzyme catalyses Exolytic cleavage of the (1-&gt;4)-beta-glycosidic linkage between N-acetylmuramic acid (MurNAc) and N-acetylglucosamine (GlcNAc) residues in peptidoglycan, from either the reducing or the non-reducing ends of the peptidoglycan chains, with concomitant formation of a 1,6-anhydrobond in the MurNAc residue.. In terms of biological role, murein-degrading enzyme that degrades murein glycan strands and insoluble, high-molecular weight murein sacculi, with the concomitant formation of a 1,6-anhydromuramoyl product. Lytic transglycosylases (LTs) play an integral role in the metabolism of the peptidoglycan (PG) sacculus. Their lytic action creates space within the PG sacculus to allow for its expansion as well as for the insertion of various structures such as secretion systems and flagella. This is Membrane-bound lytic murein transglycosylase F from Pseudomonas fluorescens (strain Pf0-1).